Consider the following 357-residue polypeptide: Carbamoyl phosphate synthase small chain (357 aa).

The tract at residues 1–168 is CPSase; that stretch reads MSKRLLILED…STATAYPSPN (168 aa). The L-glutamine site is built by Ser46, Gly220, and Gly222. The region spanning 172 to 357 is the Glutamine amidotransferase type-1 domain; the sequence is KVVVVDFGLK…FMDLMDNFKK (186 aa). The active-site Nucleophile is Cys247. L-glutamine contacts are provided by Leu248, Gln251, Asn289, Gly291, and Tyr292. Residues His331 and Asp333 contribute to the active site.

This sequence belongs to the CarA family. As to quaternary structure, composed of two chains; the small (or glutamine) chain promotes the hydrolysis of glutamine to ammonia, which is used by the large (or ammonia) chain to synthesize carbamoyl phosphate. Tetramer of heterodimers (alpha,beta)4.

The catalysed reaction is hydrogencarbonate + L-glutamine + 2 ATP + H2O = carbamoyl phosphate + L-glutamate + 2 ADP + phosphate + 2 H(+). The enzyme catalyses L-glutamine + H2O = L-glutamate + NH4(+). It participates in amino-acid biosynthesis; L-arginine biosynthesis; carbamoyl phosphate from bicarbonate: step 1/1. It functions in the pathway pyrimidine metabolism; UMP biosynthesis via de novo pathway; (S)-dihydroorotate from bicarbonate: step 1/3. Functionally, small subunit of the glutamine-dependent carbamoyl phosphate synthetase (CPSase). CPSase catalyzes the formation of carbamoyl phosphate from the ammonia moiety of glutamine, carbonate, and phosphate donated by ATP, constituting the first step of 2 biosynthetic pathways, one leading to arginine and/or urea and the other to pyrimidine nucleotides. The small subunit (glutamine amidotransferase) binds and cleaves glutamine to supply the large subunit with the substrate ammonia. The chain is Carbamoyl phosphate synthase small chain from Lactococcus lactis subsp. cremoris (strain MG1363).